Consider the following 238-residue polypeptide: MKIIAGLGNPGAQYAGNRHNIGFMAVDALQRLPSFAPWSKKFKAEISEGEIGGEKVLLMKPLTYMNLSGESVGEAMRFFKLTPADIIAIHDELDLLAGRTRIKIGGGHGGHNGLKSLDAHCGKEYRRLRLGIGHPGDKERVHGHVLGDFAKSDRVWLDPLLDAIADNAAMLVKGDDSQLMNKLALATGSKPEAEKPVKVAKPAAQSHIHQARNSAQPKKLPETGPMAEMLKRMFGKKD.

Y14 is a tRNA binding site. Residue H19 is the Proton acceptor of the active site. Residues Y64, N66, and N112 each coordinate tRNA. The tract at residues 202-225 is disordered; sequence PAAQSHIHQARNSAQPKKLPETGP. The segment covering 207–216 has biased composition (polar residues); the sequence is HIHQARNSAQ.

The protein belongs to the PTH family. In terms of assembly, monomer.

It localises to the cytoplasm. It carries out the reaction an N-acyl-L-alpha-aminoacyl-tRNA + H2O = an N-acyl-L-amino acid + a tRNA + H(+). Hydrolyzes ribosome-free peptidyl-tRNAs (with 1 or more amino acids incorporated), which drop off the ribosome during protein synthesis, or as a result of ribosome stalling. Its function is as follows. Catalyzes the release of premature peptidyl moieties from peptidyl-tRNA molecules trapped in stalled 50S ribosomal subunits, and thus maintains levels of free tRNAs and 50S ribosomes. This is Peptidyl-tRNA hydrolase from Agrobacterium fabrum (strain C58 / ATCC 33970) (Agrobacterium tumefaciens (strain C58)).